The sequence spans 1030 residues: Leucine-rich repeat and coiled-coil domain-containing protein 1 (1030 aa).

LRR repeat units follow at residues 7–28 (RNRE…CLNS), 29–50 (NLYS…RHLC), 51–72 (YLQH…DSLA), 73–94 (SLQS…EKLF), 95–116 (NLKK…IPLH), and 121–142 (KLSH…LQST). The 41-residue stretch at 160 to 200 (NPVCHALGYREIILENLPQLNSLDGLDRSGDPVTAHEVDSM) folds into the LRRCT domain. The interval 298-401 (KSEQTKLKAK…GQILGKPHAI (104 aa)) is disordered. The segment covering 300–311 (EQTKLKAKRDTD) has biased composition (basic and acidic residues). 2 stretches are compositionally biased toward polar residues: residues 338 to 368 (KTSQ…SRKQ) and 378 to 393 (ETSL…STGQ). Positions 432 to 645 (RERRWKAEQV…DLEDEFRAAL (214 aa)) form a coiled coil.

The protein belongs to the LRRCC1 family.

The protein localises to the cytoplasm. It is found in the cytoskeleton. It localises to the microtubule organizing center. Its subcellular location is the centrosome. The protein resides in the centriole. Required for the organization of the mitotic spindle. Maintains the structural integrity of centrosomes during mitosis. The polypeptide is Leucine-rich repeat and coiled-coil domain-containing protein 1 (lrrcc1) (Xenopus laevis (African clawed frog)).